A 329-amino-acid polypeptide reads, in one-letter code: Trans-1,2-dihydrobenzene-1,2-diol dehydrogenase (329 aa).

It belongs to the Gfo/Idh/MocA family. In terms of assembly, homodimer. As to expression, lens, liver and small intestine.

It carries out the reaction (1R,2R)-1,2-dihydrobenzene-1,2-diol + NADP(+) = catechol + NADPH + H(+). It catalyses the reaction D-xylose + NADP(+) = D-xylono-1,5-lactone + NADPH + H(+). Its activity is regulated as follows. Stimulated by various salts. The chain is Trans-1,2-dihydrobenzene-1,2-diol dehydrogenase (DHDH) from Oryctolagus cuniculus (Rabbit).